Consider the following 94-residue polypeptide: Protein RnfH (94 aa).

It belongs to the UPF0125 (RnfH) family.

In Yersinia pestis bv. Antiqua (strain Antiqua), this protein is Protein RnfH.